A 240-amino-acid chain; its full sequence is UDP-2,3-diacylglucosamine hydrolase (240 aa).

5 residues coordinate Mn(2+): Asp8, His10, Asp41, Asn79, and His114. 79-80 (NR) serves as a coordination point for substrate. The substrate site is built by Asp122, Ser160, Asn164, Lys167, and His195. 2 residues coordinate Mn(2+): His195 and His197.

This sequence belongs to the LpxH family. It depends on Mn(2+) as a cofactor.

It localises to the cell inner membrane. The catalysed reaction is UDP-2-N,3-O-bis[(3R)-3-hydroxytetradecanoyl]-alpha-D-glucosamine + H2O = 2-N,3-O-bis[(3R)-3-hydroxytetradecanoyl]-alpha-D-glucosaminyl 1-phosphate + UMP + 2 H(+). The protein operates within glycolipid biosynthesis; lipid IV(A) biosynthesis; lipid IV(A) from (3R)-3-hydroxytetradecanoyl-[acyl-carrier-protein] and UDP-N-acetyl-alpha-D-glucosamine: step 4/6. In terms of biological role, hydrolyzes the pyrophosphate bond of UDP-2,3-diacylglucosamine to yield 2,3-diacylglucosamine 1-phosphate (lipid X) and UMP by catalyzing the attack of water at the alpha-P atom. Involved in the biosynthesis of lipid A, a phosphorylated glycolipid that anchors the lipopolysaccharide to the outer membrane of the cell. This chain is UDP-2,3-diacylglucosamine hydrolase, found in Salmonella paratyphi C (strain RKS4594).